The sequence spans 206 residues: Dephospho-CoA kinase (206 aa).

A DPCK domain is found at 4–200; it reads TVALTGGIGS…ASYLKLASQF (197 aa). 12–17 lines the ATP pocket; sequence GSGKST.

Belongs to the CoaE family.

The protein localises to the cytoplasm. The enzyme catalyses 3'-dephospho-CoA + ATP = ADP + CoA + H(+). The protein operates within cofactor biosynthesis; coenzyme A biosynthesis; CoA from (R)-pantothenate: step 5/5. Catalyzes the phosphorylation of the 3'-hydroxyl group of dephosphocoenzyme A to form coenzyme A. The polypeptide is Dephospho-CoA kinase (Salmonella paratyphi A (strain ATCC 9150 / SARB42)).